Consider the following 274-residue polypeptide: 2,3,4,5-tetrahydropyridine-2,6-dicarboxylate N-succinyltransferase (274 aa).

Belongs to the transferase hexapeptide repeat family.

It is found in the cytoplasm. The enzyme catalyses (S)-2,3,4,5-tetrahydrodipicolinate + succinyl-CoA + H2O = (S)-2-succinylamino-6-oxoheptanedioate + CoA. The protein operates within amino-acid biosynthesis; L-lysine biosynthesis via DAP pathway; LL-2,6-diaminopimelate from (S)-tetrahydrodipicolinate (succinylase route): step 1/3. The chain is 2,3,4,5-tetrahydropyridine-2,6-dicarboxylate N-succinyltransferase from Shigella boydii serotype 18 (strain CDC 3083-94 / BS512).